A 455-amino-acid chain; its full sequence is Kynurenine 3-monooxygenase (455 aa).

Belongs to the aromatic-ring hydroxylase family. KMO subfamily. Requires FAD as cofactor.

It catalyses the reaction L-kynurenine + NADPH + O2 + H(+) = 3-hydroxy-L-kynurenine + NADP(+) + H2O. The protein operates within cofactor biosynthesis; NAD(+) biosynthesis; quinolinate from L-kynurenine: step 1/3. Catalyzes the hydroxylation of L-kynurenine (L-Kyn) to form 3-hydroxy-L-kynurenine (L-3OHKyn). Required for synthesis of quinolinic acid. This is Kynurenine 3-monooxygenase from Xanthomonas axonopodis pv. citri (strain 306).